An 81-amino-acid chain; its full sequence is Acyl carrier protein (81 aa).

The 79-residue stretch at 2 to 80 folds into the Carrier domain; the sequence is ASNEEILAGL…DAVSFIANAQ (79 aa). Serine 40 is modified (O-(pantetheine 4'-phosphoryl)serine).

The protein belongs to the acyl carrier protein (ACP) family. Post-translationally, 4'-phosphopantetheine is transferred from CoA to a specific serine of apo-ACP by AcpS. This modification is essential for activity because fatty acids are bound in thioester linkage to the sulfhydryl of the prosthetic group.

It localises to the cytoplasm. It participates in lipid metabolism; fatty acid biosynthesis. Functionally, carrier of the growing fatty acid chain in fatty acid biosynthesis. The protein is Acyl carrier protein of Paenarthrobacter aurescens (strain TC1).